The chain runs to 208 residues: Cytochrome c oxidase assembly protein CtaG (208 aa).

The Cytoplasmic portion of the chain corresponds to 1 to 19; it reads MKQRPTGPDTTPRNRRGFG. A helical; Signal-anchor for type II membrane protein membrane pass occupies residues 20–42; the sequence is RDTAVASVCGLVVALMVGASYAA. Over 43–208 the chain is Periplasmic; sequence VPFYNWFCRV…SEAGPRQGAL (166 aa).

This sequence belongs to the COX11/CtaG family.

It is found in the cell inner membrane. Its function is as follows. Exerts its effect at some terminal stage of cytochrome c oxidase synthesis, probably by being involved in the insertion of the copper B into subunit I. In Rhodopseudomonas palustris (strain BisA53), this protein is Cytochrome c oxidase assembly protein CtaG.